Reading from the N-terminus, the 621-residue chain is Auxin response factor 13 (621 aa).

Residues phenylalanine 124–lysine 228 constitute a DNA-binding region (TF-B3). Residues arginine 508–lysine 600 enclose the PB1 domain.

Belongs to the ARF family. As to quaternary structure, homodimers and heterodimers.

It is found in the nucleus. Auxin response factors (ARFs) are transcriptional factors that bind specifically to the DNA sequence 5'-TGTCTC-3' found in the auxin-responsive promoter elements (AuxREs). Could act as transcriptional activator or repressor. Formation of heterodimers with Aux/IAA proteins may alter their ability to modulate early auxin response genes expression. The protein is Auxin response factor 13 (ARF13) of Arabidopsis thaliana (Mouse-ear cress).